The following is a 224-amino-acid chain: UPF0758 protein AFE_0358 (224 aa).

The 123-residue stretch at 102 to 224 (GLDSPLRVRQ…PLSLREQGGW (123 aa)) folds into the MPN domain. Residues H173, H175, and D186 each coordinate Zn(2+). The JAMM motif motif lies at 173–186 (HNHPSGVAEPSAAD).

This sequence belongs to the UPF0758 family.

This Acidithiobacillus ferrooxidans (strain ATCC 23270 / DSM 14882 / CIP 104768 / NCIMB 8455) (Ferrobacillus ferrooxidans (strain ATCC 23270)) protein is UPF0758 protein AFE_0358.